We begin with the raw amino-acid sequence, 553 residues long: Nucleoside-diphosphatase mig-23 (553 aa).

The Cytoplasmic segment spans residues 1 to 8 (MRVSRRFT). Residues 9 to 29 (ILAITAMIFLSLIICIYAVAA) form a helical membrane-spanning segment. At 30–489 (HTTVNVILQK…IVKETHSASE (460 aa)) the chain is on the lumenal side. Residue Glu174 is the Proton acceptor of the active site. N-linked (GlcNAc...) asparagine glycans are attached at residues Asn190 and Asn284. The helical transmembrane segment at 490 to 510 (SLWAPLFFLSAVFCLFVLVCA) threads the bilayer. Topologically, residues 511–553 (KEHSLLCFDDKRRASFGLTRRQYSYKMLKEDRTSSSAFLENFA) are cytoplasmic.

It belongs to the GDA1/CD39 NTPase family.

Its subcellular location is the golgi apparatus membrane. The enzyme catalyses a ribonucleoside 5'-diphosphate + H2O = a ribonucleoside 5'-phosphate + phosphate + H(+). Its function is as follows. Seems to be able to hydrolyze ADP, UDP and GDP. Supports mig-17 glycosylation and surface expression, which is required for proper migration of distal tip cells during gonad morphogenesis. This chain is Nucleoside-diphosphatase mig-23, found in Caenorhabditis briggsae.